Consider the following 166-residue polypeptide: Cofilin-1 (166 aa).

Position 2 is an N-acetylalanine (A2). Phosphoserine occurs at positions 3 and 8. In terms of domain architecture, ADF-H spans 4 to 153 (GVAVSDGVIK…KDRCTLAEKL (150 aa)). K13 is subject to N6-acetyllysine. Residue T25 is modified to Phosphothreonine. The short motif at 30–34 (KKRKK) is the Nuclear localization signal element. S41 bears the Phosphoserine mark. The residue at position 63 (T63) is a Phosphothreonine. The residue at position 68 (Y68) is a Phosphotyrosine. K73 is subject to N6-acetyllysine. Y82 is subject to Phosphotyrosine. K132 participates in a covalent cross-link: Glycyl lysine isopeptide (Lys-Gly) (interchain with G-Cter in SUMO2). At Y140 the chain carries Phosphotyrosine. K144 carries the post-translational modification N6-acetyllysine. S156 is modified (phosphoserine).

Belongs to the actin-binding proteins ADF family. As to quaternary structure, can bind G- and F-actin in a 1:1 ratio of cofilin to actin. It is a major component of intranuclear and cytoplasmic actin rods. Interacts with the subcortical maternal complex (SCMC) via interaction with TLE6 and NLRP5. Interacts with C9orf72. In terms of processing, inactivated by phosphorylation on Ser-3. Phosphorylated on Ser-3 in resting cells. Dephosphorylated by PDXP/chronophin; this restores its activity in promoting actin filament depolymerization. The phosphorylation of Ser-24 may prevent recognition of the nuclear localization signal. Phosphorylated via a ARRB1-RAC1-LIMK1-PAK1 cascade upon active ligand stimulation of atypical chemokine receptor ACKR2. In terms of tissue distribution, widely distributed in various tissues. Not found in skeletal muscle.

Its subcellular location is the nucleus matrix. It localises to the cytoplasm. The protein resides in the cytoskeleton. The protein localises to the cell projection. It is found in the ruffle membrane. Its subcellular location is the lamellipodium membrane. It localises to the lamellipodium. The protein resides in the growth cone. The protein localises to the axon. In terms of biological role, binds to F-actin and exhibits pH-sensitive F-actin depolymerizing activity. In conjunction with the subcortical maternal complex (SCMC), plays an essential role for zygotes to progress beyond the first embryonic cell divisions via regulation of actin dynamics. Required for the centralization of the mitotic spindle and symmetric division of zygotes. Plays a role in the regulation of cell morphology and cytoskeletal organization in epithelial cells. Required for the up-regulation of atypical chemokine receptor ACKR2 from endosomal compartment to cell membrane, increasing its efficiency in chemokine uptake and degradation. Required for neural tube morphogenesis and neural crest cell migration. In Mus musculus (Mouse), this protein is Cofilin-1 (Cfl1).